A 219-amino-acid polypeptide reads, in one-letter code: Adenylate kinase (219 aa).

An ATP-binding site is contributed by 10-15 (GAGKGT). The segment at 30-59 (ATGDLFRANISQGTDLGKQARAYMDAGQLV) is NMP. Residues Thr31, Arg36, 57-59 (QLV), 85-88 (GFPR), and Gln92 each bind AMP. An LID region spans residues 126 to 164 (GRRVCRNNSAHVFHLTYNPPKAEGVCDACGGELYQRDDD). ATP is bound by residues Arg127 and 137-138 (VF). Residues Arg161 and Arg172 each coordinate AMP. Gly200 is a binding site for ATP.

It belongs to the adenylate kinase family. In terms of assembly, monomer.

It is found in the cytoplasm. It catalyses the reaction AMP + ATP = 2 ADP. Its pathway is purine metabolism; AMP biosynthesis via salvage pathway; AMP from ADP: step 1/1. Catalyzes the reversible transfer of the terminal phosphate group between ATP and AMP. Plays an important role in cellular energy homeostasis and in adenine nucleotide metabolism. The polypeptide is Adenylate kinase (Streptomyces griseus subsp. griseus (strain JCM 4626 / CBS 651.72 / NBRC 13350 / KCC S-0626 / ISP 5235)).